The primary structure comprises 169 residues: uncharacterized protein (169 aa).

The chain crosses the membrane as a helical span at residues 97-117 (IVIFCILVIVAFVIWLVVWLF). Residues 137-169 (NYSGLPTPQPTPTHYPAEQYSYDPARDRDNYRY) are disordered. A compositionally biased stretch (basic and acidic residues) spans 160–169 (PARDRDNYRY).

It localises to the membrane. This is an uncharacterized protein from Caenorhabditis elegans.